Here is a 265-residue protein sequence, read N- to C-terminus: Energy-coupling factor transporter transmembrane protein EcfT (265 aa).

A run of 6 helical transmembrane segments spans residues 29 to 49 (VMAF…ALMF), 63 to 83 (FLFF…TLLL), 94 to 114 (LVDL…AMMF), 117 to 137 (FVLI…IELT), 143 to 163 (ILAP…MLSI), and 243 to 263 (RFAD…LFWL).

The protein belongs to the energy-coupling factor EcfT family. As to quaternary structure, forms a stable energy-coupling factor (ECF) transporter complex composed of 2 membrane-embedded substrate-binding proteins (S component), 2 ATP-binding proteins (A component) and 2 transmembrane proteins (T component). May be able to interact with more than 1 S component at a time.

It is found in the cell membrane. Functionally, transmembrane (T) component of an energy-coupling factor (ECF) ABC-transporter complex. Unlike classic ABC transporters this ECF transporter provides the energy necessary to transport a number of different substrates. The protein is Energy-coupling factor transporter transmembrane protein EcfT of Listeria innocua serovar 6a (strain ATCC BAA-680 / CLIP 11262).